A 145-amino-acid polypeptide reads, in one-letter code: uncharacterized protein (145 aa).

A disordered region spans residues 1–25; the sequence is MSENNENDGFNLDPDVKEELEETKS. Positions 14-25 are enriched in basic and acidic residues; sequence PDVKEELEETKS.

This is an uncharacterized protein from His1 virus (isolate Australia/Victoria) (His1V).